The primary structure comprises 153 residues: uncharacterized protein (153 aa).

The first 19 residues, Met-1–Ala-19, serve as a signal peptide directing secretion. Active-site residues include Arg-46, Glu-54, and Arg-88.

Belongs to the thermonuclease family.

This is an uncharacterized protein from Escherichia coli O157:H7.